The following is a 69-amino-acid chain: Small, acid-soluble spore protein I (69 aa).

The protein belongs to the SspI family.

The protein resides in the spore core. The polypeptide is Small, acid-soluble spore protein I (Bacillus mycoides (strain KBAB4) (Bacillus weihenstephanensis)).